We begin with the raw amino-acid sequence, 259 residues long: Ribosomal RNA small subunit methyltransferase J (259 aa).

S-adenosyl-L-methionine is bound by residues 101–102, 117–118, 153–154, and Asp-176; these read RD, ER, and SS.

The protein belongs to the methyltransferase superfamily. RsmJ family.

The protein resides in the cytoplasm. It carries out the reaction guanosine(1516) in 16S rRNA + S-adenosyl-L-methionine = N(2)-methylguanosine(1516) in 16S rRNA + S-adenosyl-L-homocysteine + H(+). Functionally, specifically methylates the guanosine in position 1516 of 16S rRNA. This is Ribosomal RNA small subunit methyltransferase J from Vibrio vulnificus (strain YJ016).